A 626-amino-acid polypeptide reads, in one-letter code: tRNA uridine 5-carboxymethylaminomethyl modification enzyme MnmG (626 aa).

13–18 provides a ligand contact to FAD; it reads GGGHAG. 273-287 lines the NAD(+) pocket; it reads GPRYCPSIEDKIHRF.

This sequence belongs to the MnmG family. In terms of assembly, homodimer. Heterotetramer of two MnmE and two MnmG subunits. Requires FAD as cofactor.

Its subcellular location is the cytoplasm. Functionally, NAD-binding protein involved in the addition of a carboxymethylaminomethyl (cmnm) group at the wobble position (U34) of certain tRNAs, forming tRNA-cmnm(5)s(2)U34. This Acinetobacter baumannii (strain AYE) protein is tRNA uridine 5-carboxymethylaminomethyl modification enzyme MnmG.